The sequence spans 933 residues: Clumping factor A (933 aa).

Residues 1–39 form the signal peptide; it reads MNMKKKEKHAIRKKSIGVASVLVGTLIGFGLLSSKEADA. The YSIRK-G/S signaling motif signature appears at 9-20; sequence HAIRKKSIGVAS. Disordered stretches follow at residues 34–200 and 529–904; these read SKEA…SNKD and FNNG…SEDE. Positions 40-542 are ligand binding A region; sequence SENSVTQSDS…SGSGDGIDKP (503 aa). Over residues 47–65 the composition is skewed to low complexity; it reads SDSASNESKSNDSSSVSAA. Positions 71–105 are enriched in polar residues; that stretch reads TNVSDTKTSSNTNNGETSVAQNPAQQETTQSSSTN. Composition is skewed to low complexity over residues 106 to 132 and 143 to 162; these read ATTE…ATTQ and NQTS…SVNS. Polar residues predominate over residues 163-200; that stretch reads PQNSTNAENVSTTQDTSTEATPSNNESAPQSTDASNKD. Acidic residues predominate over residues 547–565; the sequence is QPDEPGEIEPIPEDSDSDP. Positions 566–598 are enriched in low complexity; that stretch reads GSDSGSDSNSDSGSDSGSDSTSDSGSDSASDSD. Residues 599–861 show a composition bias toward acidic residues; that stretch reads SASDSDSASD…DSDSESDSNS (263 aa). Residues 862–880 are compositionally biased toward low complexity; the sequence is DSESGSNNNVVPPNSPKNG. The span at 887 to 896 shows a compositional bias: basic and acidic residues; sequence NEAKDSKEPL. An LPXTG sorting signal motif is present at residues 896–900; sequence LPDTG. T899 carries the post-translational modification Pentaglycyl murein peptidoglycan amidated threonine. A propeptide spans 900–933 (removed by sortase); the sequence is GSEDEANTSLIWGLLASIGSLLLFRRKKENKDKK.

Belongs to the serine-aspartate repeat-containing protein (SDr) family.

Its subcellular location is the secreted. It is found in the cell wall. Cell surface-associated protein implicated in virulence. Promotes bacterial attachment exclusively to the gamma-chain of human fibrinogen. Induces formation of bacterial clumps. This is Clumping factor A (clfA) from Staphylococcus aureus (strain COL).